Reading from the N-terminus, the 630-residue chain is Protein phosphatase 2C-like domain-containing protein 1 (630 aa).

One can recognise a PPM-type phosphatase domain in the interval 170-621; sequence GVGICEDRNS…DNITVMVIFL (452 aa). A compositionally biased stretch (basic and acidic residues) spans 557–569; sequence TTHRKPCSEKVTD. The interval 557 to 578 is disordered; it reads TTHRKPCSEKVTDRPTSVNDVA.

Belongs to the PP2C family.

This chain is Protein phosphatase 2C-like domain-containing protein 1 (PP2D1), found in Homo sapiens (Human).